Consider the following 198-residue polypeptide: Ribonuclease HII (198 aa).

One can recognise an RNase H type-2 domain in the interval 3-198 (LSVGGIDEAG…SWETVGKLFK (196 aa)). 3 residues coordinate a divalent metal cation: D9, E10, and D104.

Belongs to the RNase HII family. Mn(2+) serves as cofactor. Requires Mg(2+) as cofactor.

The protein localises to the cytoplasm. The catalysed reaction is Endonucleolytic cleavage to 5'-phosphomonoester.. In terms of biological role, endonuclease that specifically degrades the RNA of RNA-DNA hybrids. The chain is Ribonuclease HII from Pyrobaculum arsenaticum (strain DSM 13514 / JCM 11321 / PZ6).